We begin with the raw amino-acid sequence, 196 residues long: ATP-dependent Clp protease proteolytic subunit (196 aa).

Ser96 functions as the Nucleophile in the catalytic mechanism. His121 is a catalytic residue.

It belongs to the peptidase S14 family. In terms of assembly, fourteen ClpP subunits assemble into 2 heptameric rings which stack back to back to give a disk-like structure with a central cavity, resembling the structure of eukaryotic proteasomes.

It is found in the cytoplasm. The enzyme catalyses Hydrolysis of proteins to small peptides in the presence of ATP and magnesium. alpha-casein is the usual test substrate. In the absence of ATP, only oligopeptides shorter than five residues are hydrolyzed (such as succinyl-Leu-Tyr-|-NHMec, and Leu-Tyr-Leu-|-Tyr-Trp, in which cleavage of the -Tyr-|-Leu- and -Tyr-|-Trp bonds also occurs).. In terms of biological role, cleaves peptides in various proteins in a process that requires ATP hydrolysis. Has a chymotrypsin-like activity. Plays a major role in the degradation of misfolded proteins. This chain is ATP-dependent Clp protease proteolytic subunit, found in Streptococcus pneumoniae (strain 70585).